We begin with the raw amino-acid sequence, 206 residues long: Cytochrome b-245 chaperone 1 homolog (206 aa).

Residues 21-43 (GIRSWSILVGIASVGLAAAYYSS) form a helical membrane-spanning segment. Positions 172 to 206 (ADDDYPDDDDGIEDLGLGDSSDSQDDPDGDDDEEH) are disordered. Composition is skewed to acidic residues over residues 174-184 (DDYPDDDDGIE) and 193-206 (DSQD…DEEH).

This sequence belongs to the CYBC1 family.

It localises to the endoplasmic reticulum membrane. Functions as a chaperone necessary for a stable expression of the CYBA and CYBB subunits of the cytochrome b-245 heterodimer. This is Cytochrome b-245 chaperone 1 homolog from Danio rerio (Zebrafish).